The following is a 305-amino-acid chain: RNA-binding protein rnp-1 (305 aa).

The 70-residue stretch at 3-72 (SKLFVGNLPD…KVVNIKKSTS (70 aa)) folds into the RRM domain. The CCHC-type zinc-finger motif lies at 84 to 97 (CFRCQSDEHRTPQC). Residues 284–305 (QQIQHQQATGSPAPVPAPPRLY) are disordered. Pro residues predominate over residues 296–305 (APVPAPPRLY).

Expressed throughout the germline.

Functionally, RNA-binding protein that is required for the germ line to transition from spermatogenesis to oogenesis and allow for normal oocyte development. The chain is RNA-binding protein rnp-1 from Caenorhabditis elegans.